The primary structure comprises 117 residues: Large ribosomal subunit protein uL18 (117 aa).

It belongs to the universal ribosomal protein uL18 family. As to quaternary structure, part of the 50S ribosomal subunit; part of the 5S rRNA/L5/L18/L25 subcomplex. Contacts the 5S and 23S rRNAs.

Its function is as follows. This is one of the proteins that bind and probably mediate the attachment of the 5S RNA into the large ribosomal subunit, where it forms part of the central protuberance. The polypeptide is Large ribosomal subunit protein uL18 (Yersinia pseudotuberculosis serotype O:1b (strain IP 31758)).